The sequence spans 347 residues: Malate dehydrogenase, mitochondrial (347 aa).

The transit peptide at 1–27 (MKASILRSVRSAVSRSSSSNRLLSRSF) directs the protein to the mitochondrion. Residues 41 to 47 (GAAGGIG) and D67 each bind NAD(+). Positions 114 and 120 each coordinate substrate. Residues N127 and 150 to 152 (ISN) each bind NAD(+). Substrate is bound by residues N152 and R186. The Proton acceptor role is filled by H210. Residue M261 coordinates NAD(+).

The protein belongs to the LDH/MDH superfamily. MDH type 1 family. Homodimer.

It is found in the mitochondrion matrix. The enzyme catalyses (S)-malate + NAD(+) = oxaloacetate + NADH + H(+). The sequence is that of Malate dehydrogenase, mitochondrial (MMDH) from Citrullus lanatus (Watermelon).